Reading from the N-terminus, the 252-residue chain is MLAKRIIPCLDVKEGRVVKGVNFIGLQDVGDPVEIAALYNDAGADEIVFLDITATHEGRKTIIDVVEKTASKVFIPLTVGGGISSVKDMYNLLRAGADKVSINSAAVRNPKLIEEGAQHFGSQCIVVAIDARKVAEGKWNVYVNGGRVDTGMDAIEWAKCVVMLGAGEILLTSMDADGTKNGYDLRLTEEISKSVSVPVIASGGCGHADHIIEVFQKTTVDAALAASIFHYGEATIGGVKRKLRNANVEVRL.

Active-site residues include Asp11 and Asp130.

The protein belongs to the HisA/HisF family. In terms of assembly, heterodimer of HisH and HisF.

It localises to the cytoplasm. It carries out the reaction 5-[(5-phospho-1-deoxy-D-ribulos-1-ylimino)methylamino]-1-(5-phospho-beta-D-ribosyl)imidazole-4-carboxamide + L-glutamine = D-erythro-1-(imidazol-4-yl)glycerol 3-phosphate + 5-amino-1-(5-phospho-beta-D-ribosyl)imidazole-4-carboxamide + L-glutamate + H(+). It participates in amino-acid biosynthesis; L-histidine biosynthesis; L-histidine from 5-phospho-alpha-D-ribose 1-diphosphate: step 5/9. Its function is as follows. IGPS catalyzes the conversion of PRFAR and glutamine to IGP, AICAR and glutamate. The HisF subunit catalyzes the cyclization activity that produces IGP and AICAR from PRFAR using the ammonia provided by the HisH subunit. This Bacillus cereus (strain ZK / E33L) protein is Imidazole glycerol phosphate synthase subunit HisF.